The chain runs to 323 residues: Tyrosine--tRNA ligase (323 aa).

Tyr36 is an L-tyrosine binding site. Residues Pro41–His49 carry the 'HIGH' region motif. 4 residues coordinate L-tyrosine: Tyr158, Gln162, Asp165, and Gln180. Positions Lys214–Ser218 match the 'KMSKS' region motif. Ser217 provides a ligand contact to ATP.

It belongs to the class-I aminoacyl-tRNA synthetase family. TyrS type 3 subfamily. As to quaternary structure, homodimer.

The protein resides in the cytoplasm. The enzyme catalyses tRNA(Tyr) + L-tyrosine + ATP = L-tyrosyl-tRNA(Tyr) + AMP + diphosphate + H(+). Catalyzes the attachment of tyrosine to tRNA(Tyr) in a two-step reaction: tyrosine is first activated by ATP to form Tyr-AMP and then transferred to the acceptor end of tRNA(Tyr). In Archaeoglobus fulgidus (strain ATCC 49558 / DSM 4304 / JCM 9628 / NBRC 100126 / VC-16), this protein is Tyrosine--tRNA ligase.